A 357-amino-acid polypeptide reads, in one-letter code: Alanine racemase (357 aa).

The active-site Proton acceptor; specific for D-alanine is Lys-35. Lys-35 carries the post-translational modification N6-(pyridoxal phosphate)lysine. Position 131 (Arg-131) interacts with substrate. Tyr-256 functions as the Proton acceptor; specific for L-alanine in the catalytic mechanism. Residue Met-304 coordinates substrate.

It belongs to the alanine racemase family. It depends on pyridoxal 5'-phosphate as a cofactor.

The catalysed reaction is L-alanine = D-alanine. It participates in amino-acid biosynthesis; D-alanine biosynthesis; D-alanine from L-alanine: step 1/1. Its function is as follows. Catalyzes the interconversion of L-alanine and D-alanine. May also act on other amino acids. The polypeptide is Alanine racemase (alr) (Legionella pneumophila (strain Corby)).